The sequence spans 1029 residues: Chitin synthase 2 (1029 aa).

Disordered regions lie at residues 1–160, 174–216, and 234–257; these read MDRP…GARS, SDVD…SHLR, and AHYG…QKSR. Low complexity predominate over residues 61 to 77; sequence PSVSSIHSRPSSISNIP. Basic and acidic residues predominate over residues 244–257; that stretch reads DQQRRGVREPQKSR. An N-linked (GlcNAc...) asparagine glycan is attached at N348. The next 8 helical transmembrane spans lie at 639–659, 681–701, 716–736, 752–772, 791–811, 820–840, 918–938, and 952–972; these read WLNG…QLWA, VLFT…VAGG, LYIF…QFIL, SMVI…YIVI, NLIV…FIYL, SIQY…YAFC, YMVV…SEIY, and ILWS…TFAI.

It belongs to the chitin synthase family. Class II subfamily.

Its subcellular location is the cell membrane. The enzyme catalyses [(1-&gt;4)-N-acetyl-beta-D-glucosaminyl](n) + UDP-N-acetyl-alpha-D-glucosamine = [(1-&gt;4)-N-acetyl-beta-D-glucosaminyl](n+1) + UDP + H(+). In terms of biological role, polymerizes chitin, a structural polymer of the cell wall and septum, by transferring the sugar moiety of UDP-GlcNAc to the non-reducing end of the growing chitin polymer. Plays an important role in cell wall integrity and has distinct functions in invasive hyphae and vegetative hyphae, but is not involved in plant infection. In Pyricularia oryzae (strain 70-15 / ATCC MYA-4617 / FGSC 8958) (Rice blast fungus), this protein is Chitin synthase 2.